Consider the following 447-residue polypeptide: Na(+)-translocating NADH-quinone reductase subunit A (447 aa).

It belongs to the NqrA family. Composed of six subunits; NqrA, NqrB, NqrC, NqrD, NqrE and NqrF.

The enzyme catalyses a ubiquinone + n Na(+)(in) + NADH + H(+) = a ubiquinol + n Na(+)(out) + NAD(+). Functionally, NQR complex catalyzes the reduction of ubiquinone-1 to ubiquinol by two successive reactions, coupled with the transport of Na(+) ions from the cytoplasm to the periplasm. NqrA to NqrE are probably involved in the second step, the conversion of ubisemiquinone to ubiquinol. This is Na(+)-translocating NADH-quinone reductase subunit A from Klebsiella pneumoniae subsp. pneumoniae (strain ATCC 700721 / MGH 78578).